The following is a 31-amino-acid chain: Cyclotide mden-J (31 aa).

Positions 1 to 31 (GSIPCGESCVYIPCISSIVGCACKSKVCYKN) form a cross-link, cyclopeptide (Gly-Asn). 3 disulfide bridges follow: cysteine 5-cysteine 21, cysteine 9-cysteine 23, and cysteine 14-cysteine 28.

This sequence belongs to the cyclotide family. Bracelet subfamily. In terms of processing, this is a cyclic peptide.

Its function is as follows. Probably participates in a plant defense mechanism. The protein is Cyclotide mden-J of Melicytus dentatus (Tree violet).